The chain runs to 693 residues: Protein-glutamine gamma-glutamyltransferase E (693 aa).

Ala2 carries the post-translational modification N-acetylalanine. A Phosphotyrosine modification is found at Tyr111. Position 112 is a phosphothreonine (Thr112). Residues Ala222, Asn225, Asn227, Asp228, and Asn230 each contribute to the Ca(2+) site. Residue Cys273 is part of the active site. 5 residues coordinate Ca(2+): Asp302, Asp304, Asn306, Ser308, and Asp325. Active-site residues include His331 and Asp354. Residues Asn394, Ser416, Glu444, and Glu449 each coordinate Ca(2+).

It belongs to the transglutaminase superfamily. Transglutaminase family. Consists of two polypeptide chains, which are synthesized as a precursor form of a single polypeptide. It depends on Ca(2+) as a cofactor. Activated by proteolytic processing. In vitro activation is commonly achieved by cleavage with dispase, a neutral bacterial protease. Dispase cleavage site was proposed to lie between Ser-470 and Ser-471 or between Pro-465 and Phe-466. Physiological activation may be catalyzed by CTSL and, to a lesser extent, by CTSS, but not by CTSB, CTSD nor CTSV.

Its subcellular location is the cytoplasm. The enzyme catalyses L-glutaminyl-[protein] + L-lysyl-[protein] = [protein]-L-lysyl-N(6)-5-L-glutamyl-[protein] + NH4(+). In terms of biological role, catalyzes the calcium-dependent formation of isopeptide cross-links between glutamine and lysine residues in various proteins, as well as the conjugation of polyamines to proteins. Involved in the formation of the cornified envelope (CE), a specialized component consisting of covalent cross-links of proteins beneath the plasma membrane of terminally differentiated keratinocytes. Catalyzes small proline-rich proteins (SPRR1 and SPRR2) and LOR cross-linking to form small interchain oligomers, which are further cross-linked by TGM1 onto the growing CE scaffold. In hair follicles, involved in cross-linking structural proteins to hardening the inner root sheath. The protein is Protein-glutamine gamma-glutamyltransferase E (TGM3) of Homo sapiens (Human).